The chain runs to 372 residues: Citrate synthase 2 (372 aa).

His-257 is a catalytic residue. Residue Ser-284 is modified to Phosphoserine. Asp-308 is an active-site residue.

This sequence belongs to the citrate synthase family. As to quaternary structure, homodimer.

The enzyme catalyses oxaloacetate + acetyl-CoA + H2O = citrate + CoA + H(+). It functions in the pathway carbohydrate metabolism; tricarboxylic acid cycle; isocitrate from oxaloacetate: step 1/2. Its function is as follows. Might regulate the synthesis and function of enzymes involved in later enzymatic steps of Krebs cycle. Loss in activity results in sporulation defect. The chain is Citrate synthase 2 (citZ) from Bacillus subtilis (strain 168).